Reading from the N-terminus, the 580-residue chain is Probable glucomannan 4-beta-mannosyltransferase 2 (580 aa).

The segment covering 1-12 (MSTNGGAPSQKR) has biased composition (polar residues). Positions 1-33 (MSTNGGAPSQKRSWLPSRPLLTTTTQTYPPPLL) are disordered. The span at 15-27 (LPSRPLLTTTTQT) shows a compositional bias: low complexity. A helical membrane pass occupies residues 85-105 (AVWACLAMSAMLVAEAAWMGL). Asp-182 is an active-site residue. Asp-241 and Asp-243 together coordinate substrate. Residue Asp-335 is part of the active site. 4 helical membrane-spanning segments follow: residues 414-434 (AIAPILTFLFYCIVIPLSAMV), 437-457 (VTIPVWGLVYIPTAITIMNAI), 528-548 (IYIPELLLALYLLICASYDFV), and 554-574 (YYIYIYLQAVAFTVMGFGFVG).

The protein belongs to the glycosyltransferase 2 family. Plant cellulose synthase-like A subfamily.

Its subcellular location is the golgi apparatus membrane. The catalysed reaction is GDP-mannose + (glucomannan)n = GDP + (glucomannan)n+1.. Its function is as follows. Probable mannan synthase which consists of a 4-beta-mannosyltransferase activity on mannan using GDP-mannose. The beta-1,4-mannan product is the backbone for galactomannan synthesis by galactomannan galactosyltransferase. Galactomannan is a noncellulosic polysaccharides of plant cell wall. In Oryza sativa subsp. japonica (Rice), this protein is Probable glucomannan 4-beta-mannosyltransferase 2.